Reading from the N-terminus, the 305-residue chain is GTPase Era (305 aa).

Residues 11-181 form the Era-type G domain; the sequence is RSGFISFVGR…LDVITRLLPE (171 aa). Positions 19 to 26 are G1; that stretch reads GRPNTGKS. 19 to 26 lines the GTP pocket; that stretch reads GRPNTGKS. The tract at residues 45–49 is G2; sequence ETTRH. The segment at 66-69 is G3; it reads DTPG. Residues 66–70 and 130–133 each bind GTP; these read DTPGL and TKVD. Residues 130-133 form a G4 region; sequence TKVD. A G5 region spans residues 160-162; it reads VSA. The KH type-2 domain maps to 212 to 291; the sequence is LKDELPHSVA…YLDLRIKVLK (80 aa).

The protein belongs to the TRAFAC class TrmE-Era-EngA-EngB-Septin-like GTPase superfamily. Era GTPase family. As to quaternary structure, monomer.

It is found in the cytoplasm. Its subcellular location is the cell membrane. Its function is as follows. An essential GTPase that binds both GDP and GTP, with rapid nucleotide exchange. Plays a role in 16S rRNA processing and 30S ribosomal subunit biogenesis and possibly also in cell cycle regulation and energy metabolism. The protein is GTPase Era of Corynebacterium diphtheriae (strain ATCC 700971 / NCTC 13129 / Biotype gravis).